A 427-amino-acid polypeptide reads, in one-letter code: MKIALIHYRGGLMDGVSLEMEKWKKVLTKMGHEVHIVAENKKEGVDLTLKEIGFENPDFERVNRNFFGGIKDFLSEKEFLDFLKEKEEELFHILNEALKDYDLIVPNNIWSLGLFPSLGLALSRLEKNFVAHHHDFWWERKHLIPENRRFREILDKHFPPDLPNVKHVVINTIAQRELKRRRNIDSVVVPNVMDFSSPITSEEMYHRVREELQIAPGTIVALQATRIDRRKTIELSIDVVSLLKETLTSKKEADLYNGERYSGEVILLFSGICEDEEYLKELKEYASSKGVSLLVLSEEVRKNTSLFWKLYNAADFVTYPSILEGWGNQLLEAIAAKKPVVLFEYEVFKSDIKPAGLKYVSLGDRCFRENGLVKVDERILKKAVEEISRLLFDPSLYRETVEHNFEVGKRHFSLERLEDILSREVLP.

It belongs to the glycosyltransferase group 1 family. Co(2+) is required as a cofactor. Requires Mg(2+) as cofactor. The cofactor is Mn(2+). It depends on Ni(2+) as a cofactor.

The catalysed reaction is (2R)-2-O-(alpha-D-glucopyranosyl)-glycerate + GDP-alpha-D-mannose = (2R)-2-O-[alpha-D-mannopyranosyl-(1-&gt;2)-alpha-D-glucopyranosyl]-glycerate + GDP + H(+). In terms of biological role, catalyzes the synthesis of mannosylglucosylglycerate (MGG) from glucosylglycerate (GG) and GDP-mannose. The protein is Mannosylglucosylglycerate synthase of Thermotoga maritima (strain ATCC 43589 / DSM 3109 / JCM 10099 / NBRC 100826 / MSB8).